The chain runs to 263 residues: 3-methyl-2-oxobutanoate hydroxymethyltransferase (263 aa).

Positions 45 and 84 each coordinate Mg(2+). 3-methyl-2-oxobutanoate is bound by residues 45–46, Asp84, and Lys112; that span reads DS. Residue Glu114 participates in Mg(2+) binding. Residue Glu180 is the Proton acceptor of the active site.

Belongs to the PanB family. Homodecamer; pentamer of dimers. Mg(2+) is required as a cofactor.

It is found in the cytoplasm. The catalysed reaction is 3-methyl-2-oxobutanoate + (6R)-5,10-methylene-5,6,7,8-tetrahydrofolate + H2O = 2-dehydropantoate + (6S)-5,6,7,8-tetrahydrofolate. The protein operates within cofactor biosynthesis; (R)-pantothenate biosynthesis; (R)-pantoate from 3-methyl-2-oxobutanoate: step 1/2. In terms of biological role, catalyzes the reversible reaction in which hydroxymethyl group from 5,10-methylenetetrahydrofolate is transferred onto alpha-ketoisovalerate to form ketopantoate. In Klebsiella pneumoniae (strain 342), this protein is 3-methyl-2-oxobutanoate hydroxymethyltransferase.